Reading from the N-terminus, the 370-residue chain is Cell division protein DivIB (370 aa).

The segment at 1 to 65 (MKKKKDEELT…SNKKGTKRIV (65 aa)) is disordered. Residues 1-74 (MKKKKDEELT…VKEQRLSRQK (74 aa)) are Cytoplasmic-facing. Composition is skewed to basic residues over residues 25–34 (SRFKRKRKAT) and 47–63 (RNNR…GTKR). A helical membrane pass occupies residues 75 to 95 (LGILIGSTLIVIALFFGYFYS). Residues 96–370 (SISRVQKFSV…STVNTQQDID (275 aa)) lie on the Extracellular side of the membrane. The 72-residue stretch at 98–169 (SRVQKFSVSG…GKVKIKVKEN (72 aa)) folds into the POTRA domain. Residues 295–370 (SGWTDEAKAA…STVNTQQDID (76 aa)) form a disordered region. 2 stretches are compositionally biased toward low complexity: residues 304–314 (ASESSKSAESS) and 327–342 (SESA…STET). A compositionally biased stretch (polar residues) spans 356–370 (SSNAESTVNTQQDID).

It belongs to the FtsQ/DivIB family. DivIB subfamily.

It is found in the cell membrane. Cell division protein that may be involved in stabilizing or promoting the assembly of the division complex. This chain is Cell division protein DivIB, found in Pediococcus pentosaceus (strain ATCC 25745 / CCUG 21536 / LMG 10740 / 183-1w).